The following is a 205-amino-acid chain: MNEQLHNRTMAFAGILQAIAQVQHLARHGESDTDELAASLNTILVTNPESAADVYQDKAALHKGYQLVLNQLGDSSQKDVEITRYLVGILALERKLTRSNSGLAMLAERINQVNRQLHHFAITDEQVIANLASIYSDIISNLGPKIQISGNPLCLQRPIVQHKIRALLLAAMRSAVLWRQLGGKRRHLVFARKAIIDTAKKSLTL.

The protein belongs to the HflD family.

It is found in the cytoplasm. The protein localises to the cell inner membrane. The polypeptide is High frequency lysogenization protein HflD homolog (Shewanella sp. (strain MR-4)).